We begin with the raw amino-acid sequence, 66 residues long: Phylloseptin-H7 (66 aa).

The first 22 residues, 1–22, serve as a signal peptide directing secretion; that stretch reads MAFLKKSLFLVLFLGLVSLSIC. A propeptide spanning residues 23-44 is cleaved from the precursor; that stretch reads EEEKRETEEEENDQEEDDKSEE. Residues 25–44 are disordered; that stretch reads EKRETEEEENDQEEDDKSEE. Acidic residues predominate over residues 30 to 41; the sequence is EEEENDQEEDDK. Leu65 is subject to Leucine amide.

Expressed by the skin glands.

It localises to the secreted. Its function is as follows. Has antimicrobial activity. The chain is Phylloseptin-H7 from Pithecopus hypochondrialis (Orange-legged leaf frog).